Here is a 297-residue protein sequence, read N- to C-terminus: MPVFKGSGVAIVTPFNEEGVNFEKLGELIEWHIKEGTDAIIICGTTGEASTMTQEEQQQAIKFTVEKVAGRIPVIAGTGSNNTAHAVEMSEYAQSAGADALLVITPYYNKTTQKGLVAHFTEIARHVDIPIIIYNVPSRTSLNMLPETYLELSKHVDNVVGVKEASGDIVQVAEIARIMGKSFEIYSGNDDQVIPIMSLGGLGVISVTANIIPAKIHEMTTAYLNGDIEKARDMQLELNPLNKALFIETNPIPVKTAMNLMGFNVGPLRLPLVEMSDKNLEYLKSVLSKYGLLKEAN.

Position 46 (threonine 46) interacts with pyruvate. Tyrosine 134 (proton donor/acceptor) is an active-site residue. Lysine 163 functions as the Schiff-base intermediate with substrate in the catalytic mechanism. Residue isoleucine 205 participates in pyruvate binding.

Belongs to the DapA family. In terms of assembly, homotetramer; dimer of dimers.

It localises to the cytoplasm. It carries out the reaction L-aspartate 4-semialdehyde + pyruvate = (2S,4S)-4-hydroxy-2,3,4,5-tetrahydrodipicolinate + H2O + H(+). The protein operates within amino-acid biosynthesis; L-lysine biosynthesis via DAP pathway; (S)-tetrahydrodipicolinate from L-aspartate: step 3/4. Catalyzes the condensation of (S)-aspartate-beta-semialdehyde [(S)-ASA] and pyruvate to 4-hydroxy-tetrahydrodipicolinate (HTPA). The protein is 4-hydroxy-tetrahydrodipicolinate synthase of Thermoanaerobacter pseudethanolicus (strain ATCC 33223 / 39E) (Clostridium thermohydrosulfuricum).